A 262-amino-acid chain; its full sequence is 2-keto-4-pentenoate hydratase (262 aa).

It belongs to the hydratase/decarboxylase family. MhpD subfamily. The cofactor is a divalent metal cation.

The catalysed reaction is (S)-4-hydroxy-2-oxopentanoate = (2Z)-2-hydroxypenta-2,4-dienoate + H2O. It participates in aromatic compound metabolism; 3-phenylpropanoate degradation. Functionally, catalyzes the conversion of 2-hydroxypentadienoic acid (enolic form of 2-oxopent-4-enoate) to 4-hydroxy-2-ketopentanoic acid. The sequence is that of 2-keto-4-pentenoate hydratase from Paraburkholderia phymatum (strain DSM 17167 / CIP 108236 / LMG 21445 / STM815) (Burkholderia phymatum).